Here is a 471-residue protein sequence, read N- to C-terminus: ATP synthase subunit beta (471 aa).

153–160 (GGAGVGKT) is an ATP binding site.

Belongs to the ATPase alpha/beta chains family. F-type ATPases have 2 components, CF(1) - the catalytic core - and CF(0) - the membrane proton channel. CF(1) has five subunits: alpha(3), beta(3), gamma(1), delta(1), epsilon(1). CF(0) has four main subunits: a(1), b(1), b'(1) and c(9-12).

It localises to the cell membrane. The catalysed reaction is ATP + H2O + 4 H(+)(in) = ADP + phosphate + 5 H(+)(out). Functionally, produces ATP from ADP in the presence of a proton gradient across the membrane. The catalytic sites are hosted primarily by the beta subunits. This Roseiflexus sp. (strain RS-1) protein is ATP synthase subunit beta.